Reading from the N-terminus, the 139-residue chain is Holo-[acyl-carrier-protein] synthase (139 aa).

Residues Asp-8 and Glu-61 each coordinate Mg(2+).

The protein belongs to the P-Pant transferase superfamily. AcpS family. Mg(2+) serves as cofactor.

It is found in the cytoplasm. The enzyme catalyses apo-[ACP] + CoA = holo-[ACP] + adenosine 3',5'-bisphosphate + H(+). Transfers the 4'-phosphopantetheine moiety from coenzyme A to a Ser of acyl-carrier-protein. The sequence is that of Holo-[acyl-carrier-protein] synthase from Rhodopseudomonas palustris (strain BisA53).